Reading from the N-terminus, the 2171-residue chain is DExH-box ATP-dependent RNA helicase DExH12 (2171 aa).

Disordered regions lie at residues 24–80, 218–267, and 383–426; these read SLVL…KERD, EENE…NEGT, and TAKE…ESGW. 2 stretches are compositionally biased toward basic and acidic residues: residues 31–40 and 50–80; these read NRPRDTHEPT and IDPRSFGDRVAKGRPQELEDKLKKSKKKERD. A compositionally biased stretch (acidic residues) spans 218–242; it reads EENEEDDEESDPDMVEEDDDEEDDE. Over residues 383–423 the composition is skewed to basic and acidic residues; that stretch reads TAKEREENLQKSINEEARRLKDETGGDGGRGRRDVADRDSE. The region spanning 514–697 is the Helicase ATP-binding 1 domain; that stretch reads DTALFKAENI…FLRVDLKKGL (184 aa). ATP is bound at residue 527 to 534; the sequence is APTGAGKT. The DEIH box signature appears at 639–642; that stretch reads DEIH. Residues 731–941 form the Helicase C-terminal 1 domain; that stretch reads LCYQKVLAGA…GTVQNAREAC (211 aa). The SEC63 1 domain maps to 1006–1308; the sequence is TDLGRIASYY…WLGSETVLPV (303 aa). Residues 1360–1537 form the Helicase ATP-binding 2 domain; the sequence is TVLYNTNDNV…WIGASSHGLF (178 aa). 1373-1380 contributes to the ATP binding site; the sequence is APTGSGKT. The DELH box motif lies at 1479–1482; that stretch reads DELH. One can recognise a Helicase C-terminal 2 domain in the interval 1574-1779; that stretch reads AIVQHAKNKK…GVIENKQDAV (206 aa). Residues 1839–2157 enclose the SEC63 2 domain; that stretch reads PLNLGMIASY…LGCDQEYSFS (319 aa).

Belongs to the DExH box helicase family. Interacts with CLO.

It is found in the nucleus. The enzyme catalyses ATP + H2O = ADP + phosphate + H(+). Functionally, RNA helicase that plays an essential role in pre-mRNA splicing as component of the U5 snRNP and U4/U6-U5 tri-snRNP complexes. Involved in spliceosome assembly, activation and disassembly. This chain is DExH-box ATP-dependent RNA helicase DExH12, found in Arabidopsis thaliana (Mouse-ear cress).